A 53-amino-acid chain; its full sequence is Conotoxin Cal9.2e (53 aa).

Residues 1–6 (KKGVTQ) constitute a propeptide that is removed on maturation. Cystine bridges form between Cys15–Cys32, Cys20–Cys42, and Cys22–Cys47.

As to expression, expressed by the venom duct.

The protein localises to the secreted. Its function is as follows. Probable neurotoxin with unknown target. Possibly targets ion channels. This Californiconus californicus (California cone) protein is Conotoxin Cal9.2e.